Reading from the N-terminus, the 384-residue chain is F-box only protein 5 (384 aa).

Residues 25 to 67 (EVKGHKVSPRKTGALSLRSPAATNVSTPLESRSKGPHNKENYQ) form a disordered region. A compositionally biased stretch (polar residues) spans 45–54 (AATNVSTPLE). Residues 55-67 (SRSKGPHNKENYQ) are compositionally biased toward basic and acidic residues. The F-box domain maps to 187–234 (CKLMRKDMRHILARILGLLGDCDLISCTKVSRTWRKIICQDQLALQRW). The ZBR-type zinc finger occupies 311 to 359 (SLRRCSRCSSPARFDAVMQRAVCTRISCAFEFCTLCQSAFHDSTPCRNT). Zn(2+)-binding residues include Cys315, Cys318, Cys333, Cys338, Cys343, Cys346, His351, and Cys356.

Part of a SCF (SKP1-cullin-F-box) protein ligase complex.

It is found in the nucleus. The protein resides in the cytoplasm. It participates in protein modification; protein ubiquitination. In terms of biological role, during embryonic development, regulates the integrity of the genome and therefore the cell cycle progression by preventing rereplication through an APC-Cdh1-dependent mechanism. This chain is F-box only protein 5, found in Danio rerio (Zebrafish).